The chain runs to 348 residues: Lipooligosaccharide heptosyltransferase 2 (348 aa).

Belongs to the glycosyltransferase 9 family.

The catalysed reaction is an L-alpha-D-Hep-(1-&gt;5)-[alpha-Kdo-(2-&gt;4)]-alpha-Kdo-(2-&gt;6)-lipid A + ADP-L-glycero-beta-D-manno-heptose = an L-alpha-D-Hep-(1-&gt;3)-L-alpha-D-Hep-(1-&gt;5)-[alpha-Kdo-(2-&gt;4)]-alpha-Kdo-(2-&gt;6)-lipid A + ADP + H(+). The protein operates within bacterial outer membrane biogenesis; LOS core biosynthesis. Its function is as follows. Glycosyltransferase involved in the biosynthesis of the core oligosaccharide region of lipooligosaccharide (LOS). Catalyzes the addition of a heptose unit to the heptosyl-Kdo2-lipid A module. The protein is Lipooligosaccharide heptosyltransferase 2 of Haemophilus ducreyi (strain 35000HP / ATCC 700724).